The sequence spans 478 residues: Serine hydroxymethyltransferase, cytosolic (478 aa).

Lysine 251 is modified (N6-(pyridoxal phosphate)lysine).

The protein belongs to the SHMT family. As to quaternary structure, homotetramer. Identified in complex with FAM175B and the other subunits of the BRISC complex, at least composed of FAM175B/ABRO1, BRCC3/BRCC36, BABAM2 and BABAM1/NBA1. Pyridoxal 5'-phosphate serves as cofactor.

The protein resides in the cytoplasm. It carries out the reaction (6R)-5,10-methylene-5,6,7,8-tetrahydrofolate + glycine + H2O = (6S)-5,6,7,8-tetrahydrofolate + L-serine. It functions in the pathway one-carbon metabolism; tetrahydrofolate interconversion. Its function is as follows. Interconversion of serine and glycine. This is Serine hydroxymethyltransferase, cytosolic (Shmt1) from Mus musculus (Mouse).